We begin with the raw amino-acid sequence, 58 residues long: Basic phospholipase A2 homolog PocTX (58 aa).

The cysteines at positions 29 and 45 are disulfide-linked.

As to expression, expressed by the venom gland.

Its subcellular location is the secreted. Functionally, wasp venom phospholipase A2 homolog that lacks enzymatic activity. This chain is Basic phospholipase A2 homolog PocTX, found in Polybia occidentalis (Paper wasp).